The sequence spans 665 residues: Putative phospholipid:diacylglycerol acyltransferase 2 (665 aa).

Residues 48–68 (LIGYLCTAWWLLLFLYHSVPV) traverse the membrane as a helical segment. Serine 237 (acyl-ester intermediate) is an active-site residue. Active-site charge relay system residues include aspartate 567 and histidine 620.

It belongs to the AB hydrolase superfamily. Lipase family.

The protein localises to the membrane. It carries out the reaction a glycerophospholipid + a 1,2-diacyl-sn-glycerol = a monoacylglycerophospholipid + a triacyl-sn-glycerol. In Arabidopsis thaliana (Mouse-ear cress), this protein is Putative phospholipid:diacylglycerol acyltransferase 2 (PDAT2).